The sequence spans 544 residues: Methyl-accepting chemotaxis protein McpP (544 aa).

3 consecutive transmembrane segments (helical) span residues 12–32 (RLWL…LLML), 50–70 (VVQT…AGTL), and 192–212 (DASL…MLIA). The region spanning 213–267 (RSIARPLQEAVQAMGNIASGESDLTRRLDTHGSDEITHLGEHFNRFNGKLQGVVG) is the HAMP domain. Positions 272–508 (AAHALAQSAG…EINRNVLDTA (237 aa)) constitute a Methyl-accepting transducer domain.

This sequence belongs to the methyl-accepting chemotaxis (MCP) protein family.

Its subcellular location is the cell membrane. Functionally, chemotactic-signal transducers respond to changes in the concentration of attractants and repellents in the environment, transduce a signal from the outside to the inside of the cell, and facilitate sensory adaptation through the variation of the level of methylation. McpP is a chemoreceptor that responds specifically to some C2 and C3 carboxylic acids. Recognizes acetate, pyruvate, propionate, and L-lactate. The polypeptide is Methyl-accepting chemotaxis protein McpP (Pseudomonas putida (strain ATCC 47054 / DSM 6125 / CFBP 8728 / NCIMB 11950 / KT2440)).